A 396-amino-acid chain; its full sequence is L-lactate dehydrogenase (396 aa).

One can recognise an FMN hydroxy acid dehydrogenase domain in the interval 1–380 (MIISAASDYR…SRDSLVQELG (380 aa)). Tyrosine 24 contacts substrate. FMN-binding residues include serine 106 and glutamine 127. Residue tyrosine 129 participates in substrate binding. Threonine 155 serves as a coordination point for FMN. Arginine 164 is a substrate binding site. Lysine 251 provides a ligand contact to FMN. Histidine 275 (proton acceptor) is an active-site residue. Arginine 278 is a binding site for substrate. Residue 306–330 (DSGIRNGLDVVRMIALGADSVLLGR) coordinates FMN.

This sequence belongs to the FMN-dependent alpha-hydroxy acid dehydrogenase family. The cofactor is FMN.

The protein localises to the cell inner membrane. It catalyses the reaction (S)-lactate + A = pyruvate + AH2. Functionally, catalyzes the conversion of L-lactate to pyruvate. Is coupled to the respiratory chain. This is L-lactate dehydrogenase from Citrobacter koseri (strain ATCC BAA-895 / CDC 4225-83 / SGSC4696).